We begin with the raw amino-acid sequence, 642 residues long: MPVITLPDGSQRSFDKPVSVYEVAASIGPGLAKATLGGRVNGQRVDAHDLISEDANLVIFTPKDDDGLEIIRHSCAHLLGHAIKQLYPDVKMAIGPTIDNGFYYDVDLEHKLTDEDIAALEARMLELAKTEYDVVKKKVSWQEAHAVFAARGESYKLEILERDIPQSDQPGLYHHEEYIDMCRGPHVPNMRFCLNFKLMRVSGAYWRGDSNNKMLQRIYGTAFADAKQLKAYLNLLEEAAKRDHRKLAKKFDLFHLQDEAPGMVFWHPKGWTLWQQIEQYMRAKQNDWGYQEVRTPLIMDRVLWEKSGHWENYRENMFTTESEKRDFAVKPMNCPGHVQIFNHGLRSHKDLPLRLAEFGSCHRNEASGALHGIMRVRGFVQDDAHIFCTEDQVVAEVAAFNQMLKSVYDDFGFTDIAVKLSLRPEKYAGSLETWNKAEEGLRTALRAAGLEWEELPGEGAFYGPKIEYQIKDALGRSWQCGTIQLDYVLPERLDAEYVADDNVRKRPVMLHRAILGSFERFLGILIEHYEGSFPVWLSPVQVVVANITDSQAEYVKRVEKALREQGIRVIADLRNEKIGFKIREHTIQRVPYLLVVGDKEVENQSLAVRTRDGKDLGVMPLDAFIAHLTADIARRGRVFSAE.

The region spanning 1 to 61 (MPVITLPDGS…SEDANLVIFT (61 aa)) is the TGS domain. The catalytic stretch occupies residues 243–534 (DHRKLAKKFD…LIEHYEGSFP (292 aa)). Residues cysteine 334, histidine 385, and histidine 511 each coordinate Zn(2+).

Belongs to the class-II aminoacyl-tRNA synthetase family. In terms of assembly, homodimer. Requires Zn(2+) as cofactor.

It is found in the cytoplasm. It catalyses the reaction tRNA(Thr) + L-threonine + ATP = L-threonyl-tRNA(Thr) + AMP + diphosphate + H(+). Functionally, catalyzes the attachment of threonine to tRNA(Thr) in a two-step reaction: L-threonine is first activated by ATP to form Thr-AMP and then transferred to the acceptor end of tRNA(Thr). Also edits incorrectly charged L-seryl-tRNA(Thr). This chain is Threonine--tRNA ligase, found in Cellvibrio japonicus (strain Ueda107) (Pseudomonas fluorescens subsp. cellulosa).